The primary structure comprises 287 residues: Protease HtpX (287 aa).

Helical transmembrane passes span 4–24 (VMLF…VLNI) and 36–56 (LSGL…ISLM). His-143 lines the Zn(2+) pocket. Residue Glu-144 is part of the active site. Zn(2+) is bound at residue His-147. 2 consecutive transmembrane segments (helical) span residues 158-178 (LMQG…ANIV) and 192-212 (MVYF…ASFI). Residue Glu-221 participates in Zn(2+) binding.

It belongs to the peptidase M48B family. It depends on Zn(2+) as a cofactor.

It is found in the cell inner membrane. In Vibrio atlanticus (strain LGP32) (Vibrio splendidus (strain Mel32)), this protein is Protease HtpX.